The chain runs to 129 residues: Photosystem II extrinsic protein V (129 aa).

Positions 35, 38, 39, and 90 each coordinate heme c.

It belongs to the cytochrome c family. PsbV subfamily. PSII is composed of 1 copy each of membrane proteins PsbA, PsbB, PsbC, PsbD, PsbE, PsbF, PsbH, PsbI, PsbJ, PsbK, PsbL, PsbM, PsbT, PsbX, PsbY, PsbZ, Psb30/Ycf12, peripheral proteins PsbO, CyanoQ (PsbQ), PsbU, PsbV and a large number of cofactors. It forms dimeric complexes. Homodimer in crystal structure. It depends on heme c as a cofactor.

It is found in the cellular thylakoid membrane. Functionally, one of the extrinsic, lumenal subunits of photosystem II (PSII). PSII is a light-driven water plastoquinone oxidoreductase, using light energy to abstract electrons from H(2)O, generating a proton gradient subsequently used for ATP formation. The extrinsic proteins stabilize the structure of photosystem II oxygen-evolving complex (OEC), the ion environment of oxygen evolution and protect the OEC against heat-induced inactivation. Low-potential cytochrome c that plays a role in the OEC of PSII. The polypeptide is Photosystem II extrinsic protein V (Limnospira maxima (Arthrospira maxima)).